The following is a 318-amino-acid chain: NADH-ubiquinone oxidoreductase chain 1 (318 aa).

The next 8 helical transmembrane spans lie at 2–22 (FLIN…FLTL), 69–89 (FLFT…WAPL), 102–122 (LLFI…SGWA), 146–166 (MTTI…TAFA), 171–191 (HLWL…STLA), 222–242 (LFFM…VILF), 253–273 (EIST…FLWV), and 294–314 (LPLT…LACI).

It belongs to the complex I subunit 1 family.

It localises to the mitochondrion inner membrane. It catalyses the reaction a ubiquinone + NADH + 5 H(+)(in) = a ubiquinol + NAD(+) + 4 H(+)(out). Core subunit of the mitochondrial membrane respiratory chain NADH dehydrogenase (Complex I) that is believed to belong to the minimal assembly required for catalysis. Complex I functions in the transfer of electrons from NADH to the respiratory chain. The immediate electron acceptor for the enzyme is believed to be ubiquinone. This is NADH-ubiquinone oxidoreductase chain 1 (MT-ND1) from Loxodonta africana (African elephant).